The sequence spans 240 residues: Small ribosomal subunit protein uS2 (240 aa).

The protein belongs to the universal ribosomal protein uS2 family. Component of the small ribosomal subunit. Mature ribosomes consist of a small (40S) and a large (60S) subunit. The 40S subunit contains about 33 different proteins and 1 molecule of RNA (18S). The 60S subunit contains about 49 different proteins and 3 molecules of RNA (25S, 5.8S and 5S). Interacts with RPS21.

Its subcellular location is the cytoplasm. In terms of biological role, required for the assembly and/or stability of the 40S ribosomal subunit. Required for the processing of the 20S rRNA-precursor to mature 18S rRNA in a late step of the maturation of 40S ribosomal subunits. The protein is Small ribosomal subunit protein uS2 of Enterocytozoon bieneusi (strain H348) (Microsporidian parasite).